The following is a 613-amino-acid chain: MSASSLLEQRPKGQANKVQNGAVTQKDTLNDDEFEPYLNAQPRQSNAYTAMSDSYMPSYYSPSIGFTYSLNEAAWSTGGDPPMPYLASYGQLSNGEHHFLPDAMFGQSGALGNNPFLGQHGFNFFPSGIDFPAWGNSSSQGQSTQSSGYSSSYAYAPSTLGGAMIDGQSPFAANEPLNKAVGMNSLDQGMAGLKIGAGDMAPKVVGSGLPGGPLSQVSTAPTMPPASMAPAKTASWADIASKPAKPQPKLKTKGGLGGTNLPPPPIKHNMDIGTWDNKGNMPKPAAPQQTSLPTNGQPPNQSSPQPGATAGGVPQLPLSNGQLVPPTGQLVQHPLPPGGQPGAVPPQLSQGPPASQPSQPTRWVPPRNRANGFGDAAGGPGQSPPNSGMGGITVPAEPHPVLEKLRMVNNYNPKDFDWNPKHGRVFIIKSYSEDDIHRSIKYNIWCSTEHGNKRLDAAYRSLANKGPLYLLFSVNGSGHFCGVAEMRSPVDYNTCAGVWSQDKWKGRFDVRWIFVKDVPNSQLRHIRLENNENKPVTNSRDTQEVPLDKARQVLKIIASYKHTTSIFDDFSHYEKRQEEEESVKKVEVQGSDPYSNNSSRSHYRMQDRQGRVK.

Disordered regions lie at residues 1-43 (MSAS…AQPR), 215-234 (SQVS…AKTA), and 244-396 (AKPQ…TVPA). A localization to mRNA processing bodies (P-bodies) region spans residues 2–397 (SASSLLEQRP…GMGGITVPAE (396 aa)). Positions 16-27 (NKVQNGAVTQKD) are enriched in polar residues. Composition is skewed to low complexity over residues 218–234 (STAP…AKTA), 295–307 (NGQP…PQPG), and 345–360 (PPQL…PSQP). The tract at residues 398–613 (PHPVLEKLRM…RMQDRQGRVK (216 aa)) is interaction with m6A-containing mRNAs. The YTH domain maps to 423-557 (GRVFIIKSYS…DKARQVLKII (135 aa)). RNA contacts are provided by residues 429-431 (KSY), Asp-435, 445-446 (WC), Asn-475, Trp-499, and Trp-504. Composition is skewed to basic and acidic residues over residues 578 to 587 (EEEESVKKVE) and 604 to 613 (RMQDRQGRVK). Residues 578 to 613 (EEEESVKKVEVQGSDPYSNNSSRSHYRMQDRQGRVK) are disordered.

It belongs to the YTHDF family. YTHDF2 subfamily.

It is found in the cytoplasm. The protein resides in the cytosol. Its subcellular location is the P-body. The protein localises to the stress granule. It localises to the nucleus. Functionally, specifically recognizes and binds N6-methyladenosine (m6A)-containing RNAs, and regulates their stability. M6A is a modification present at internal sites of mRNAs and some non-coding RNAs and plays a role in mRNA stability and processing. Acts as a regulator of mRNA stability by promoting degradation of m6A-containing mRNAs. The YTHDF paralogs (ythdf1, ythdf2 and ythdf3) share m6A-containing mRNAs targets and act redundantly to mediate mRNA degradation and cellular differentiation. Plays a key role in maternal-to-zygotic transition during early embryonic development, the process during which maternally inherited mRNAs are degraded: acts by binding m6A-containing maternal mRNAs and promoting their degradation. More than one-third of maternal mRNAs can be modified by m6A. Binding to m6A-containing mRNAs results in mRNA degradation. Also involved in hematopoietic stem cells specification by binding to m6A-containing mRNAs, such as notch1a, and promote their degradation. The decreased Notch signaling following notch1a degradation promotes endothelial to hematopoietic transition. Promotes formation of phase-separated membraneless compartments, such as P-bodies or stress granules, by undergoing liquid-liquid phase separation upon binding to mRNAs containing multiple m6A-modified residues: polymethylated mRNAs act as a multivalent scaffold for the binding of YTHDF proteins, juxtaposing their disordered regions and thereby leading to phase separation. The resulting mRNA-YTHDF complexes then partition into different endogenous phase-separated membraneless compartments, such as P-bodies, stress granules or neuronal RNA granules. The protein is YTH domain-containing family protein 2 of Danio rerio (Zebrafish).